A 168-amino-acid chain; its full sequence is MISFIFAMDANRLIGKDNDLPWHLPNDLAYFKKITSGHSIIMGRKTFESIGRPLPNRKNIVVTSAPDSEFQGCTVVSSLKDVLDICSGPEECFVIGGAQLYTDLFPYADRLYMTKIHHEFEGDRHFPEFDESNWKLVSSEQGTKDEKNPYDYEFLMYEKKNSSKAGGF.

Positions 1–159 constitute a DHFR domain; sequence MISFIFAMDA…YDYEFLMYEK (159 aa). 5–7 lines the substrate pocket; sequence IFA. Residues 6–7 and 14–19 contribute to the NADP(+) site; these read FA and IGKDND. Asp27 is a substrate binding site. 43–46 contacts NADP(+); that stretch reads GRKT. Arg57 contacts substrate. NADP(+) is bound by residues 62–65 and 95–100; these read VTSA and IGGAQL. Thr114 serves as a coordination point for substrate.

It belongs to the dihydrofolate reductase family.

It carries out the reaction (6S)-5,6,7,8-tetrahydrofolate + NADP(+) = 7,8-dihydrofolate + NADPH + H(+). It functions in the pathway cofactor biosynthesis; tetrahydrofolate biosynthesis; 5,6,7,8-tetrahydrofolate from 7,8-dihydrofolate: step 1/1. Functionally, key enzyme in folate metabolism. Catalyzes an essential reaction for de novo glycine and purine synthesis, and for DNA precursor synthesis. This Bacillus subtilis (strain 168) protein is Dihydrofolate reductase (dfrA).